The sequence spans 844 residues: Patched-related protein 9 (844 aa).

An SSD domain is found at 264–421; it reads LIPWMPWTSL…VTFFNAVMSL (158 aa).

Belongs to the patched family.

This chain is Patched-related protein 9 (ptr-9), found in Caenorhabditis elegans.